A 257-amino-acid polypeptide reads, in one-letter code: NAD-capped RNA hydrolase NudC (257 aa).

Residues Lys-25 and Arg-69 each contribute to the substrate site. 2 residues coordinate Zn(2+): Cys-98 and Cys-101. Glu-111 provides a ligand contact to substrate. Zn(2+) is bound by residues Cys-116 and Cys-119. Position 124 (Tyr-124) interacts with substrate. Residues 125 to 248 (PQIAPCIIVA…TVARRLIEDT (124 aa)) form the Nudix hydrolase domain. A divalent metal cation contacts are provided by Ala-158, Glu-174, and Glu-178. The Nudix box signature appears at 159-180 (GFVEVGETLEQAVAREVMEESG). 192–199 (QPWPFPQS) lines the substrate pocket. A divalent metal cation is bound at residue Glu-219. A substrate-binding site is contributed by Ala-241.

Belongs to the Nudix hydrolase family. NudC subfamily. In terms of assembly, homodimer. Mg(2+) serves as cofactor. Requires Mn(2+) as cofactor. It depends on Zn(2+) as a cofactor.

The enzyme catalyses a 5'-end NAD(+)-phospho-ribonucleoside in mRNA + H2O = a 5'-end phospho-adenosine-phospho-ribonucleoside in mRNA + beta-nicotinamide D-ribonucleotide + 2 H(+). The catalysed reaction is NAD(+) + H2O = beta-nicotinamide D-ribonucleotide + AMP + 2 H(+). It carries out the reaction NADH + H2O = reduced beta-nicotinamide D-ribonucleotide + AMP + 2 H(+). Its function is as follows. mRNA decapping enzyme that specifically removes the nicotinamide adenine dinucleotide (NAD) cap from a subset of mRNAs by hydrolyzing the diphosphate linkage to produce nicotinamide mononucleotide (NMN) and 5' monophosphate mRNA. The NAD-cap is present at the 5'-end of some mRNAs and stabilizes RNA against 5'-processing. Has preference for mRNAs with a 5'-end purine. Catalyzes the hydrolysis of a broad range of dinucleotide pyrophosphates. This Shigella flexneri serotype 5b (strain 8401) protein is NAD-capped RNA hydrolase NudC.